A 392-amino-acid chain; its full sequence is 23S rRNA (uracil(747)-C(5))-methyltransferase RlmC (392 aa).

Residues Cys-4, Cys-12, Cys-15, and Cys-93 each coordinate [4Fe-4S] cluster. S-adenosyl-L-methionine-binding residues include Gln-218, Phe-247, Glu-275, and Asn-321. Cys-348 acts as the Nucleophile in catalysis.

This sequence belongs to the class I-like SAM-binding methyltransferase superfamily. RNA M5U methyltransferase family. RlmC subfamily.

It carries out the reaction uridine(747) in 23S rRNA + S-adenosyl-L-methionine = 5-methyluridine(747) in 23S rRNA + S-adenosyl-L-homocysteine + H(+). Its function is as follows. Catalyzes the formation of 5-methyl-uridine at position 747 (m5U747) in 23S rRNA. In Haemophilus influenzae (strain ATCC 51907 / DSM 11121 / KW20 / Rd), this protein is 23S rRNA (uracil(747)-C(5))-methyltransferase RlmC.